We begin with the raw amino-acid sequence, 263 residues long: Phosphatidylglycerol--prolipoprotein diacylglyceryl transferase (263 aa).

4 helical membrane-spanning segments follow: residues Val-10–Phe-30, Met-56–Tyr-76, Ile-91–Leu-111, and Gly-117–Phe-137. Arg-139 provides a ligand contact to a 1,2-diacyl-sn-glycero-3-phospho-(1'-sn-glycerol). 3 consecutive transmembrane segments (helical) span residues Pro-171–Phe-191, Gly-199–Val-219, and Phe-231–Leu-251.

This sequence belongs to the Lgt family.

The protein resides in the cell inner membrane. The catalysed reaction is L-cysteinyl-[prolipoprotein] + a 1,2-diacyl-sn-glycero-3-phospho-(1'-sn-glycerol) = an S-1,2-diacyl-sn-glyceryl-L-cysteinyl-[prolipoprotein] + sn-glycerol 1-phosphate + H(+). It participates in protein modification; lipoprotein biosynthesis (diacylglyceryl transfer). Catalyzes the transfer of the diacylglyceryl group from phosphatidylglycerol to the sulfhydryl group of the N-terminal cysteine of a prolipoprotein, the first step in the formation of mature lipoproteins. The protein is Phosphatidylglycerol--prolipoprotein diacylglyceryl transferase of Nitratidesulfovibrio vulgaris (strain DP4) (Desulfovibrio vulgaris).